Consider the following 583-residue polypeptide: SHC-transforming protein 1 (583 aa).

M1 carries the post-translational modification N-acetylmethionine. Disordered stretches follow at residues 1-92 (MDLL…DDGE) and 113-137 (KLSG…WTRH). Low complexity predominate over residues 16 to 44 (ESLSSLEEGASGSTPPEELPSPSASSLGP). S36 is modified (phosphoserine). S139 carries the phosphoserine modification. K154 bears the N6-acetyllysine mark. Residues 156–339 (MGPGVSYLVR…AGFDGSAWDE (184 aa)) enclose the PID domain. The segment at 340–487 (EEEEPPDHQY…SMAEQLRGEP (148 aa)) is CH1. Y349 and Y350 each carry phosphotyrosine. A disordered region spans residues 372-416 (AAPGAARSTAPSAQTPSHLGATLPVGQPVGGDPEVRKQMPPPPPC). Y427 bears the Phosphotyrosine mark. Phosphoserine is present on S453. Residues 488-579 (WFHGKLSRRE…GSELCLQQPV (92 aa)) form the SH2 domain.

In terms of assembly, interacts with CPNE3; this interaction may mediate the binding of CPNE3 with ERBB2. Interacts with the Trk receptors NTRK1, NTRK2 and NTRK3; in a phosphotyrosine-dependent manner. Interacts with the NPXY motif of tyrosine-phosphorylated IGF1R and INSR in vitro via the PID domain. Once activated, binds to GRB2. Interacts with tyrosine-phosphorylated CD3T and DDR2. Interacts with the N-terminal region of APS. Interacts with phosphorylated LRP1 and IRS4. Interacts with INPP5D/SHIP1 and INPPL1/SHIP2. Interacts with ALK, GAB2, GRB7 and KIT. Interacts with PTPN6/SHP (tyrosine phosphorylated). Identified in a complex containing FGFR4, NCAM1, CDH2, PLCG1, FRS2, SRC, SHC1, GAP43 and CTTN. Interacts with FLT4 (tyrosine-phosphorylated). Interacts with EPHB1 and GRB2; activates the MAPK/ERK cascade to regulate cell migration. Interacts with PDGFRB (tyrosine-phosphorylated). Interacts with ERBB4. Interacts with TEK/TIE2 (tyrosine-phosphorylated). Interacts with PTK2/FAK1. Interacts with CEACAM1; this interaction is CEACAM1-phosphorylation-dependent and mediates interaction with EGFR or INSR resulting in decrease coupling of SHC1 to the MAPK3/ERK1-MAPK1/ERK2 pathway. Interacts (via PID domain) with PEAK1 (when phosphorylated). Found in a complex with PPP1CA, PPP1CC, SHC1 and PEAK1. In terms of processing, phosphorylated by activated epidermal growth factor receptor. Phosphorylated in response to KIT signaling. Tyrosine phosphorylated in response to FLT3 and FLT4 signaling and by ligand-activated ALK. Tyrosine phosphorylated by ligand-activated PDGFRB. Tyrosine phosphorylated by TEK/TIE2. May be tyrosine phosphorylated by activated PTK2/FAK1. Tyrosine phosphorylated by activated PTK2B/PYK2. Dephosphorylation by PTPN2 may regulate interaction with GRB2.

The protein localises to the cytoplasm. Its subcellular location is the cell junction. It is found in the focal adhesion. In terms of biological role, signaling adapter that couples activated growth factor receptors to signaling pathways. Participates in a signaling cascade initiated by activated KIT and KITLG/SCF. Participates in signaling downstream of the angiopoietin receptor TEK/TIE2, and plays a role in the regulation of endothelial cell migration and sprouting angiogenesis. In Pongo abelii (Sumatran orangutan), this protein is SHC-transforming protein 1 (SHC1).